The chain runs to 763 residues: MAP7 domain-containing protein 2 (763 aa).

The span at 1–11 (MERSGGNGAGA) shows a compositional bias: gly residues. 3 disordered regions span residues 1–72 (MERS…REKC), 102–127 (LEEQ…LREE), and 140–531 (ERTQ…KAMI). Over residues 12-31 (RAGAPSEGAAKGSSLLSAKS) the composition is skewed to low complexity. The span at 53–72 (LKSDERQRLAKERREEREKC) shows a compositional bias: basic and acidic residues. 2 stretches are compositionally biased toward polar residues: residues 184–212 (PSDT…NLPK) and 241–251 (LKSSYKSSPTR). The segment covering 312-321 (KRSSSPVKSK) has biased composition (low complexity). 3 stretches are compositionally biased toward basic and acidic residues: residues 354–372 (ETLK…KEGA), 381–420 (PREE…EHSA), and 437–531 (LAEK…KAMI). Residues 434-575 (AKILAEKRRQ…QERLERKKRI (142 aa)) are a coiled coil.

It belongs to the MAP7 family. In terms of assembly, interacts (via N-terminus) with microtubules; facilitates microtubule stabilization. Interacts with kinesin-1 family members, KIF5A, KIF5B and KIF5C. As to expression, detected only in the brain and testis (at the protein level).

The protein resides in the cytoplasm. Its subcellular location is the cytoskeleton. It is found in the microtubule organizing center. It localises to the centrosome. The protein localises to the cell projection. The protein resides in the axon. Microtubule-stabilizing protein involved in the control of cell motility and neurite outgrowth. Acts as a critical cofactor for kinesin transport; in the proximal axon regulates kinesin-1 family members, KIF5A, KIF5B and KIF5C recruitment to microtubules and contributes to kinesin-1-mediated transport in the axons. In Rattus norvegicus (Rat), this protein is MAP7 domain-containing protein 2 (Map7d2).